The primary structure comprises 590 residues: G protein-coupled receptor kinase 5 (590 aa).

Positions 1–185 are N-terminal; it reads MELENIVANT…LERQPVTKNT (185 aa). The interval 20–39 is interaction with calmodulin; the sequence is GGKRKGKSKKWKEILKFPHI. The region spanning 53-171 is the RGS domain; that stretch reads YCSLCDKQPV…LDSMYFDRFL (119 aa). Residues 186–448 form the Protein kinase domain; that stretch reads FRQYRVLGKG…AAEVKRHPFF (263 aa). Residues 192-200 and K215 contribute to the ATP site; that span reads LGKGGFGEV. The active-site Proton acceptor is the D311. The Nuclear localization signal motif lies at 388 to 395; sequence RKEKVKRE. The AGC-kinase C-terminal domain occupies 449 to 514; sequence RNMNFKRLEA…GSVPIPWQSE (66 aa). S484 carries the phosphoserine; by autocatalysis modification. T485 carries the post-translational modification Phosphothreonine; by autocatalysis. The sufficient for membrane localization stretch occupies residues 546 to 565; that stretch reads PKKGLLQRLFKRQHQNNSKS. Residues 554 to 590 are disordered; that stretch reads LFKRQHQNNSKSSPNSKTSFNHHINSNHVSSNSTGSS. Residues 561-590 are compositionally biased toward low complexity; the sequence is NNSKSSPNSKTSFNHHINSNHVSSNSTGSS. S579 is subject to Phosphoserine.

The protein belongs to the protein kinase superfamily. AGC Ser/Thr protein kinase family. GPRK subfamily. In terms of assembly, interacts with ST13 (via the C-terminus 303-319 AA). Interacts with TP53/p53. Interacts with HTR4 (via C-terminus 330-346 AA); this interaction is promoted by 5-HT (serotonin). Interacts with HDAC5. Interacts with GIT1. Autophosphorylated. Autophosphorylation may play a critical role in the regulation of GRK5 kinase activity. Highest levels in lung, heart, retina, lingual epithelium. Very little in brain, liver, kidney.

It localises to the cytoplasm. The protein localises to the nucleus. Its subcellular location is the cell membrane. The catalysed reaction is [G-protein-coupled receptor] + ATP = [G-protein-coupled receptor]-phosphate + ADP + H(+). With respect to regulation, inhibited by calmodulin with an IC(50) of 50 nM. Calmodulin inhibits GRK5 association with receptor and phospholipid. Serine/threonine kinase that phosphorylates preferentially the activated forms of a variety of G-protein-coupled receptors (GPCRs). Such receptor phosphorylation initiates beta-arrestin-mediated receptor desensitization, internalization, and signaling events leading to their down-regulation. Phosphorylates a variety of GPCRs, including adrenergic receptors (Beta-2 adrenergic receptor), muscarinic acetylcholine receptors (more specifically Gi-coupled M2/M4 subtypes), dopamine receptors and opioid receptors. In addition to GPCRs, also phosphorylates various substrates: Hsc70-interacting protein/ST13, TP53/p53, HDAC5, and arrestin-1/ARRB1. Phosphorylation of ARRB1 by GRK5 inhibits G-protein independent MAPK1/MAPK3 signaling downstream of 5HT4-receptors. Phosphorylation of HDAC5, a repressor of myocyte enhancer factor 2 (MEF2) leading to nuclear export of HDAC5 and allowing MEF2-mediated transcription. Phosphorylation of TP53/p53, a crucial tumor suppressor, inhibits TP53/p53-mediated apoptosis. Phosphorylation of ST13 regulates internalization of the chemokine receptor. Phosphorylates rhodopsin (RHO) (in vitro) and a non G-protein-coupled receptor, LRP6 during Wnt signaling (in vitro). This chain is G protein-coupled receptor kinase 5 (GRK5), found in Bos taurus (Bovine).